A 285-amino-acid chain; its full sequence is NADPH-dependent 7-cyano-7-deazaguanine reductase (285 aa).

Substrate is bound at residue 91–93 (IES). 93 to 94 (SK) is an NADPH binding site. The Thioimide intermediate role is filled by cysteine 192. Aspartate 199 serves as the catalytic Proton donor. 231-232 (HE) contacts substrate. NADPH is bound at residue 260 to 261 (RG).

Belongs to the GTP cyclohydrolase I family. QueF type 2 subfamily. Homodimer.

Its subcellular location is the cytoplasm. It catalyses the reaction 7-aminomethyl-7-carbaguanine + 2 NADP(+) = 7-cyano-7-deazaguanine + 2 NADPH + 3 H(+). Its pathway is tRNA modification; tRNA-queuosine biosynthesis. Catalyzes the NADPH-dependent reduction of 7-cyano-7-deazaguanine (preQ0) to 7-aminomethyl-7-deazaguanine (preQ1). In Psychromonas ingrahamii (strain DSM 17664 / CCUG 51855 / 37), this protein is NADPH-dependent 7-cyano-7-deazaguanine reductase.